The primary structure comprises 254 residues: 5'-methylthioadenosine/S-adenosylhomocysteine nucleosidase (254 aa).

Position 1 is an N-acetylmethionine (Met-1). Residue Glu-25 is the Proton acceptor of the active site. S-methyl-5'-thioadenosine-binding positions include Thr-103 and 186–189; that span reads KDME. Lys-186 and Asp-212 together coordinate adenine. Asp-212 acts as the Proton donor in catalysis.

This sequence belongs to the PNP/UDP phosphorylase family. MtnN subfamily. As to quaternary structure, homodimer.

It catalyses the reaction S-methyl-5'-thioadenosine + H2O = 5-(methylsulfanyl)-D-ribose + adenine. It carries out the reaction S-adenosyl-L-homocysteine + H2O = S-(5-deoxy-D-ribos-5-yl)-L-homocysteine + adenine. The enzyme catalyses 5'-deoxyadenosine + H2O = 5-deoxy-D-ribose + adenine. The protein operates within amino-acid biosynthesis; L-methionine biosynthesis via salvage pathway; S-methyl-5-thio-alpha-D-ribose 1-phosphate from S-methyl-5'-thioadenosine (hydrolase route): step 1/2. Its function is as follows. Enzyme of the methionine cycle that catalyzes the irreversible cleavage of the glycosidic bond in 5'-methylthioadenosine (MTA) and S-adenosylhomocysteine (SAH/AdoHcy) to a lesser extent, to adenine and the corresponding thioribose, 5'-methylthioribose and S-ribosylhomocysteine, respectively. Contributes to the maintenance of AdoMet homeostasis and is required to sustain high rates of ethylene synthesis. This chain is 5'-methylthioadenosine/S-adenosylhomocysteine nucleosidase (MTN2), found in Arabidopsis thaliana (Mouse-ear cress).